The following is a 413-amino-acid chain: Tryptophan synthase beta chain (413 aa).

An N6-(pyridoxal phosphate)lysine modification is found at lysine 106.

It belongs to the TrpB family. As to quaternary structure, tetramer of two alpha and two beta chains. Pyridoxal 5'-phosphate is required as a cofactor.

The enzyme catalyses (1S,2R)-1-C-(indol-3-yl)glycerol 3-phosphate + L-serine = D-glyceraldehyde 3-phosphate + L-tryptophan + H2O. Its pathway is amino-acid biosynthesis; L-tryptophan biosynthesis; L-tryptophan from chorismate: step 5/5. In terms of biological role, the beta subunit is responsible for the synthesis of L-tryptophan from indole and L-serine. This is Tryptophan synthase beta chain from Methylorubrum populi (strain ATCC BAA-705 / NCIMB 13946 / BJ001) (Methylobacterium populi).